The following is a 138-amino-acid chain: Putative pre-16S rRNA nuclease (138 aa).

The protein belongs to the YqgF nuclease family.

The protein resides in the cytoplasm. Could be a nuclease involved in processing of the 5'-end of pre-16S rRNA. This is Putative pre-16S rRNA nuclease from Escherichia coli O157:H7.